The primary structure comprises 302 residues: Probable 2-(5''-triphosphoribosyl)-3'-dephosphocoenzyme-A synthase (302 aa).

Belongs to the CitG/MdcB family.

It carries out the reaction 3'-dephospho-CoA + ATP = 2'-(5''-triphospho-alpha-D-ribosyl)-3'-dephospho-CoA + adenine. The protein is Probable 2-(5''-triphosphoribosyl)-3'-dephosphocoenzyme-A synthase of Citrobacter koseri (strain ATCC BAA-895 / CDC 4225-83 / SGSC4696).